The following is a 3133-amino-acid chain: Cysteine repeat modular protein A (3133 aa).

The tract at residues 1–39 is disordered; it reads MDSASTSMSRVHPSGVYRRPLLPSGGPRSTSERDERVDL. Basic and acidic residues predominate over residues 30–39; that stretch reads TSERDERVDL. Residues 123–143 form a helical membrane-spanning segment; it reads LFLLFSSSPLLLLLLLHQFFI. 2 stretches are compositionally biased toward basic and acidic residues: residues 173 to 211 and 301 to 311; these read TFEE…DGKE and NESEKAERARL. 2 disordered regions span residues 173-234 and 294-317; these read TFEE…EGRR and VSPS…STPA. N-linked (GlcNAc...) asparagine glycosylation is found at N301, N392, and N470. The region spanning 577 to 644 is the Kringle domain; it reads DETLEQGKLY…DPHVRFDFCD (68 aa). Intrachain disulfides connect C599–C631 and C620–C643. N1364 and N1532 each carry an N-linked (GlcNAc...) asparagine glycan. The next 3 membrane-spanning stretches (helical) occupy residues 2229–2249, 2276–2296, and 2339–2359; these read MVWN…FNIV, LTGI…PSWI, and VFYA…MSII. N2369 carries an N-linked (GlcNAc...) asparagine glycan. 3 helical membrane passes run 2420-2440, 2489-2509, and 2539-2559; these read AAKF…FVYS, VGIT…FLVL, and WEMV…VALI. N-linked (GlcNAc...) asparagine glycosylation occurs at N2565. The chain crosses the membrane as a helical span at residues 2569-2589; sequence VWLAVVIAVIFLIIHLVTQPF. Residue N2602 is glycosylated (N-linked (GlcNAc...) asparagine). Transmembrane regions (helical) follow at residues 2607–2627 and 2632–2652; these read IWTI…SGSV and LLFV…SLMF. Basic and acidic residues-rich tracts occupy residues 2827-2838 and 3049-3069; these read FAAKDETPTAEE and QEEN…DREI. Disordered regions lie at residues 2827–2847 and 3049–3101; these read FAAK…DERL and QEEN…LPEG. Residues 2955-3068 are a coiled coil; that stretch reads SEALQKRNRK…KEEREEADRE (114 aa). Residues 3083–3094 show a composition bias toward acidic residues; that stretch reads GEDDTATIDDSS.

Component of a complex, at least composed of cysteine repeat modular protein A (CRMPa), cysteine repeat modular protein B (CRMPb), micronemal protein 15 (MIC15) and thrombospondin type 1 domain-containing protein (TSP1).

It localises to the cell membrane. The protein resides in the endoplasmic reticulum. It is found in the golgi apparatus. Its function is as follows. Required for triggering rhoptry secretion. Plays a role in host cell invasion. This is Cysteine repeat modular protein A from Toxoplasma gondii.